The chain runs to 385 residues: UPF0284 protein A9601_04941 (385 aa).

It belongs to the UPF0284 family.

This Prochlorococcus marinus (strain AS9601) protein is UPF0284 protein A9601_04941.